The primary structure comprises 377 residues: O-phospho-L-seryl-tRNA:Cys-tRNA synthase (377 aa).

Pyridoxal 5'-phosphate-binding positions include 83–84 (AR), asparagine 188, and 211–213 (SGH). The residue at position 214 (lysine 214) is an N6-(pyridoxal phosphate)lysine.

This sequence belongs to the SepCysS family. In terms of assembly, homodimer. Interacts with SepRS. Pyridoxal 5'-phosphate is required as a cofactor.

The catalysed reaction is O-phospho-L-seryl-tRNA(Cys) + hydrogen sulfide + H(+) = L-cysteinyl-tRNA(Cys) + phosphate. Converts O-phospho-L-seryl-tRNA(Cys) (Sep-tRNA(Cys)) to L-cysteinyl-tRNA(Cys) (Cys-tRNA(Cys)). This Methanothermobacter thermautotrophicus (strain ATCC 29096 / DSM 1053 / JCM 10044 / NBRC 100330 / Delta H) (Methanobacterium thermoautotrophicum) protein is O-phospho-L-seryl-tRNA:Cys-tRNA synthase.